The sequence spans 39 residues: Phospholipase A2 (39 aa).

H36 is an active-site residue.

The protein belongs to the phospholipase A2 family. Group III subfamily. The cofactor is Ca(2+). As to expression, expressed by the venom gland.

Its subcellular location is the secreted. The catalysed reaction is a 1,2-diacyl-sn-glycero-3-phosphocholine + H2O = a 1-acyl-sn-glycero-3-phosphocholine + a fatty acid + H(+). PLA2 catalyzes the calcium-dependent hydrolysis of the 2-acyl groups in 3-sn-phosphoglycerides. The polypeptide is Phospholipase A2 (Heloderma horridum horridum (Mexican beaded lizard)).